A 495-amino-acid polypeptide reads, in one-letter code: Homeobox protein ceh-21 (495 aa).

The segment covering 1-14 has biased composition (polar residues); it reads MSQQFQASSGTGSA. Disordered regions lie at residues 1 to 24 and 89 to 267; these read MSQQFQASSGTGSASLREFKTEHE and TAES…PGGE. The span at 106-120 shows a compositional bias: basic and acidic residues; that stretch reads LEEKSDKSSDGDGTS. Positions 132-145 are enriched in acidic residues; the sequence is NETEEDHEEKEDEA. Over residues 149–162 the composition is skewed to basic and acidic residues; sequence SRRESTRLKRKLLE. Composition is skewed to polar residues over residues 163–179 and 199–217; these read SQKTVQTTGNSSRASSK and TPEQSKAATKRQSSTTVRA. The span at 218–233 shows a compositional bias: low complexity; sequence SSTCGSSVSSTSTVSS. Basic and acidic residues predominate over residues 242–254; that stretch reads RATETPKLEELAP. Residues 284–370 constitute a DNA-binding region (CUT); the sequence is NAQIGDDEEL…VRRALCFLPK (87 aa). Residues 389 to 449 constitute a DNA-binding region (homeobox); it reads KTVKVIRLTF…MNSRRRLRID (61 aa). The interval 450–473 is disordered; it reads QQISRSSRSTGNGADTEDELDEED. The segment covering 464–473 has biased composition (acidic residues); sequence DTEDELDEED.

The protein belongs to the CUT homeobox family.

The protein resides in the nucleus. Its function is as follows. Probable DNA-binding regulatory protein involved in cell-fate specification. The chain is Homeobox protein ceh-21 (ceh-21) from Caenorhabditis elegans.